Consider the following 229-residue polypeptide: Non-structural protein P8 (229 aa).

2 consecutive transmembrane segments (helical) span residues 119–139 (IIHM…VCTL) and 162–182 (SLNP…MVCA).

This sequence belongs to the orbivirus NS3 family. In terms of assembly, forms homooligomers via coiled-coil motif. Interacts with host OPTN; this interaction inhibits innate immune response.

The protein resides in the host cell membrane. It is found in the host Golgi apparatus. Its function is as follows. Plays a role in the inhibition of host innate immune response. Interacts with host OPTN and thus inhibits the recruitment of TBK1 to the host Golgi apparatus. In turn, downstream partner IRF3 cannot be activated and IFN-beta production is impaired. In terms of biological role, facilitates viral particle release either by increasing plasma membrane permeability through a viroporin-like activity or by viral budding. The polypeptide is Non-structural protein P8 (Segment-10) (Bluetongue virus 17 (isolate USA) (BTV 17)).